A 550-amino-acid polypeptide reads, in one-letter code: Flagellin (550 aa).

It belongs to the bacterial flagellin family.

The protein resides in the secreted. It localises to the bacterial flagellum. Flagellin is the subunit protein which polymerizes to form the filaments of bacterial flagella. The protein is Flagellin (fliC) of Shigella flexneri.